Here is a 367-residue protein sequence, read N- to C-terminus: Leucine carboxyl methyltransferase 1 (367 aa).

Residues R84, G109, D132, 187 to 188, and E212 each bind S-adenosyl-L-methionine; that span reads DL.

This sequence belongs to the methyltransferase superfamily. LCMT family.

It carries out the reaction [phosphatase 2A protein]-C-terminal L-leucine + S-adenosyl-L-methionine = [phosphatase 2A protein]-C-terminal L-leucine methyl ester + S-adenosyl-L-homocysteine. Its function is as follows. Methylates the carboxyl group of the C-terminal leucine residue of protein phosphatase 2A catalytic subunits to form alpha-leucine ester residues. This is Leucine carboxyl methyltransferase 1 (PPM1) from Candida albicans (strain SC5314 / ATCC MYA-2876) (Yeast).